Consider the following 724-residue polypeptide: Palmitoyltransferase AKR1 (724 aa).

At 1-308 (MSGQLNVAED…HAKMVTFFTP (308 aa)) the chain is on the cytoplasmic side. ANK repeat units follow at residues 54 to 84 (PTLV…DVKA), 90 to 119 (EQVS…DVNI), 124 to 153 (LEAT…DPLI), 157 to 187 (QGYN…PVDS), 191 to 220 (TGKT…DVRV), and 224 to 253 (GGFT…DVFL). Residues 309–329 (WLILGLILSFFAYFSILLAIL) form a helical membrane-spanning segment. Over 330–331 (GC) the chain is Lumenal. The chain crosses the membrane as a helical span at residues 332 to 352 (LLTVLAAGYGLYNFVFPSFIL). The Cytoplasmic segment spans residues 353–360 (MKRIVIFK). Residues 361 to 381 (TPLLAGILSGTIFWLLYVWLF) form a helical membrane-spanning segment. Topologically, residues 382-392 (KMLPATFDDEP) are lumenal. The helical transmembrane segment at 393-413 (ILNLTVFALFAGVVFLLTKLL) threads the bilayer. Residues 414 to 489 (QSDPGYIVPA…YNYIGFRNHK (76 aa)) lie on the Cytoplasmic side of the membrane. One can recognise a DHHC domain in the interval 446 to 496 (HFCIHSWIRLPLRAKYKRFVHSVILRYDHYCPWIYNYIGFRNHKIFIYFIL). Cys-476 (S-palmitoyl cysteine intermediate) is an active-site residue. A helical membrane pass occupies residues 490 to 510 (IFIYFILLLDLGILALAKLCL). Residues 511-543 (EYFDELKDHAKNKDALKCSILSKDLCAGFTYDP) are Lumenal-facing. Residues 544 to 564 (FTLFLLEWVCVQGMWILALSF) form a helical membrane-spanning segment. Residues 565-724 (VQFFECLKGV…ERVISIEEIV (160 aa)) are Cytoplasmic-facing.

It belongs to the DHHC palmitoyltransferase family. AKR/ZDHHC17 subfamily.

The protein localises to the early endosome membrane. The protein resides in the golgi apparatus membrane. It carries out the reaction L-cysteinyl-[protein] + hexadecanoyl-CoA = S-hexadecanoyl-L-cysteinyl-[protein] + CoA. Palmitoyltransferase specific for casein kinase 1. The protein is Palmitoyltransferase AKR1 (AKR1) of Eremothecium gossypii (strain ATCC 10895 / CBS 109.51 / FGSC 9923 / NRRL Y-1056) (Yeast).